Consider the following 126-residue polypeptide: Arginine decarboxylase proenzyme (126 aa).

The Schiff-base intermediate with substrate; via pyruvic acid role is filled by serine 74. Serine 74 is subject to Pyruvic acid (Ser); by autocatalysis. The active-site Proton acceptor; for processing activity is histidine 79. Cysteine 94 functions as the Proton donor; for catalytic activity in the catalytic mechanism.

The protein belongs to the prokaryotic AdoMetDC family. Type 1 subfamily. In terms of assembly, heterooctamer of four alpha and four beta chains arranged as a tetramer of alpha/beta heterodimers. It depends on pyruvate as a cofactor. Post-translationally, is synthesized initially as an inactive proenzyme. Formation of the active enzyme involves a self-maturation process in which the active site pyruvoyl group is generated from an internal serine residue via an autocatalytic post-translational modification. Two non-identical subunits are generated from the proenzyme in this reaction, and the pyruvate is formed at the N-terminus of the alpha chain, which is derived from the carboxyl end of the proenzyme. The post-translation cleavage follows an unusual pathway, termed non-hydrolytic serinolysis, in which the side chain hydroxyl group of the serine supplies its oxygen atom to form the C-terminus of the beta chain, while the remainder of the serine residue undergoes an oxidative deamination to produce ammonia and the pyruvoyl group blocking the N-terminus of the alpha chain.

It catalyses the reaction L-arginine + H(+) = agmatine + CO2. Its pathway is amine and polyamine biosynthesis; agmatine biosynthesis; agmatine from L-arginine: step 1/1. Its function is as follows. Specifically catalyzes the decarboxylation of L-arginine to agmatine. Has no S-adenosylmethionine decarboxylase (AdoMetDC) activity. The sequence is that of Arginine decarboxylase proenzyme from Pyrobaculum islandicum (strain DSM 4184 / JCM 9189 / GEO3).